Consider the following 127-residue polypeptide: Large ribosomal subunit protein bL19 (127 aa).

This sequence belongs to the bacterial ribosomal protein bL19 family.

In terms of biological role, this protein is located at the 30S-50S ribosomal subunit interface and may play a role in the structure and function of the aminoacyl-tRNA binding site. The polypeptide is Large ribosomal subunit protein bL19 (Acidovorax ebreus (strain TPSY) (Diaphorobacter sp. (strain TPSY))).